We begin with the raw amino-acid sequence, 118 residues long: Putative membrane protein insertion efficiency factor (118 aa).

It belongs to the UPF0161 family.

Its subcellular location is the cell inner membrane. Functionally, could be involved in insertion of integral membrane proteins into the membrane. The protein is Putative membrane protein insertion efficiency factor of Helicobacter pylori (strain P12).